Here is a 270-residue protein sequence, read N- to C-terminus: BPI fold-containing family A member 1 (270 aa).

Residues 1–19 form the signal peptide; the sequence is MFLVGSLVVLCGLLAQSTA. The tract at residues 104–109 is important for surfactant activity and antibacterial properties; that stretch reads LVGGLL. Residue Asn-174 is glycosylated (N-linked (GlcNAc...) asparagine). The cysteines at positions 196 and 238 are disulfide-linked.

It belongs to the BPI/LBP/Plunc superfamily. Plunc family. Monomer. Interacts (via N-terminus) with SCNN1B, a subunit of the heterotrimeric epithelial sodium channel (ENaC); this inhibits proteolytic activation of ENaC. As to expression, detected in adult nasal epithelium, heart, lung, spleen, testis and salivary gland, and in embryonic nasal epithelium, lung, salivary gland and thymus.

The protein resides in the secreted. Its function is as follows. Lipid-binding protein which shows high specificity for the surfactant phospholipid dipalmitoylphosphatidylcholine (DPPC). Plays a role in the innate immune responses of the upper airways. Reduces the surface tension in secretions from airway epithelia and inhibits the formation of biofilm by pathogenic Gram-negative bacteria, such as P.aeruginosa and K.pneumoniae. Negatively regulates proteolytic cleavage of SCNN1G, an event that is required for activation of the epithelial sodium channel (ENaC), and thereby contributes to airway surface liquid homeostasis and proper clearance of mucus. Plays a role in the airway inflammatory response after exposure to irritants. May attract macrophages and neutrophils. The chain is BPI fold-containing family A member 1 (Bpifa1) from Rattus norvegicus (Rat).